Here is a 375-residue protein sequence, read N- to C-terminus: Transaldolase (375 aa).

The active-site Schiff-base intermediate with substrate is lysine 145.

It belongs to the transaldolase family. Type 2 subfamily.

Its subcellular location is the cytoplasm. It carries out the reaction D-sedoheptulose 7-phosphate + D-glyceraldehyde 3-phosphate = D-erythrose 4-phosphate + beta-D-fructose 6-phosphate. It functions in the pathway carbohydrate degradation; pentose phosphate pathway; D-glyceraldehyde 3-phosphate and beta-D-fructose 6-phosphate from D-ribose 5-phosphate and D-xylulose 5-phosphate (non-oxidative stage): step 2/3. Functionally, transaldolase is important for the balance of metabolites in the pentose-phosphate pathway. The protein is Transaldolase of Mycobacterium leprae (strain Br4923).